Reading from the N-terminus, the 190-residue chain is Adenylate kinase (190 aa).

12-17 (GSGKTT) is an ATP binding site. Residues 33-62 (STGDLLRAEVASGSELGKTIDSFISKGNLV) are NMP. AMP-binding positions include threonine 34, arginine 39, 60 to 62 (NLV), 87 to 90 (GYPR), and glutamine 94. The interval 129-135 (GRARGAD) is LID. Arginine 130 serves as a coordination point for ATP. Positions 132 and 144 each coordinate AMP. Arginine 172 serves as a coordination point for ATP.

The protein belongs to the adenylate kinase family. In terms of assembly, monomer.

It is found in the cytoplasm. It catalyses the reaction AMP + ATP = 2 ADP. It functions in the pathway purine metabolism; AMP biosynthesis via salvage pathway; AMP from ADP: step 1/1. Functionally, catalyzes the reversible transfer of the terminal phosphate group between ATP and AMP. Plays an important role in cellular energy homeostasis and in adenine nucleotide metabolism. The sequence is that of Adenylate kinase from Campylobacter lari (strain RM2100 / D67 / ATCC BAA-1060).